The chain runs to 161 residues: Phosphotransferase enzyme IIB component GlvB (161 aa).

The helical transmembrane segment at 10 to 32 (LTQIAIGLCFTLLYFVVFRTLIL) threads the bilayer. Residues 70–152 (LDQAAGILQA…DSLINSHQSA (83 aa)) enclose the PTS EIIB type-1 domain. Cys-92 functions as the Phosphocysteine intermediate in the catalytic mechanism.

Its subcellular location is the cell inner membrane. Functionally, the phosphoenolpyruvate-dependent sugar phosphotransferase system (sugar PTS), a major carbohydrate active -transport system, catalyzes the phosphorylation of incoming sugar substrates concomitantly with their translocation across the cell membrane. This operon may be cryptic in wild-type K12 strains. The chain is Phosphotransferase enzyme IIB component GlvB from Escherichia coli (strain K12).